The sequence spans 620 residues: Glutathione-regulated potassium-efflux system protein KefC (620 aa).

The next 12 helical transmembrane spans lie at 4 to 24 (HTLL…PIAV), 26 to 46 (LGLG…PWGL), 54 to 74 (SILH…GLEL), 90 to 110 (GALQ…FLGL), 114 to 134 (VAEL…MQAM), 149 to 169 (FAVL…IPLL), 178 to 198 (LGAF…VVLL), 218 to 238 (VFSA…EEVG), 270 to 290 (GLLL…GTLV), 294 to 314 (LRIL…LWLV), 327 to 347 (WFAV…GAAQ), and 359 to 379 (ALTL…VLLT). The 120-residue stretch at 399–518 (QPRVIVAGFG…AGVAMPERET (120 aa)) folds into the RCK N-terminal domain. Residues 599–620 (QGTAEGKHSGEVADEPEVKPSI) are disordered.

This sequence belongs to the monovalent cation:proton antiporter 2 (CPA2) transporter (TC 2.A.37) family. KefC subfamily. Homodimer. Interacts with the regulatory subunit KefF.

The protein resides in the cell inner membrane. Pore-forming subunit of a potassium efflux system that confers protection against electrophiles. Catalyzes K(+)/H(+) antiport. In Salmonella agona (strain SL483), this protein is Glutathione-regulated potassium-efflux system protein KefC.